Consider the following 428-residue polypeptide: Peptidase B (428 aa).

The Mn(2+) site is built by Lys195 and Asp200. Lys207 is an active-site residue. Mn(2+)-binding residues include Asp218, Asp277, and Glu279. Residue Arg281 is part of the active site.

Belongs to the peptidase M17 family. As to quaternary structure, homohexamer. Requires Mn(2+) as cofactor.

Its subcellular location is the cytoplasm. The catalysed reaction is Release of an N-terminal amino acid, Xaa, from a peptide or arylamide. Xaa is preferably Glu or Asp but may be other amino acids, including Leu, Met, His, Cys and Gln.. Its function is as follows. Probably plays an important role in intracellular peptide degradation. This chain is Peptidase B, found in Klebsiella pneumoniae subsp. pneumoniae (strain ATCC 700721 / MGH 78578).